The chain runs to 561 residues: Potassium-transporting ATPase potassium-binding subunit (561 aa).

10 consecutive transmembrane segments (helical) span residues 4–24 (IVMQDVFFVVLLLVLAVPLGI), 65–85 (AVSVLAFSAVGFVFVMAVLML), 133–153 (IGLTVQNFVSAATGIAVLFAV), 177–197 (LYILLPLSLILALLLVSQGVV), 253–273 (FTNLIEMLAILLIPVALVVMF), 285–305 (AIMTAMMIVFVIGVVAITISE), 380–400 (GLYGMIGFIILTVFIAGLLVG), 417–437 (MVCLLILVPPLLTLFGTAVAV), 484–504 (MVGAVMMLLARFIPLVAALYL), and 528–548 (FIGLLIGVVVLVGALSFLPAL).

The protein belongs to the KdpA family. In terms of assembly, the system is composed of three essential subunits: KdpA, KdpB and KdpC.

It localises to the cell membrane. Part of the high-affinity ATP-driven potassium transport (or Kdp) system, which catalyzes the hydrolysis of ATP coupled with the electrogenic transport of potassium into the cytoplasm. This subunit binds the extracellular potassium ions and delivers the ions to the membrane domain of KdpB through an intramembrane tunnel. The protein is Potassium-transporting ATPase potassium-binding subunit of Listeria monocytogenes serovar 1/2a (strain ATCC BAA-679 / EGD-e).